An 83-amino-acid chain; its full sequence is Parvalbumin beta 3 (83 aa).

2 EF-hand domains span residues 13 to 48 (KSND…FSAG) and 52 to 83 (LTAG…LVKA). The Ca(2+) site is built by aspartate 26, aspartate 28, serine 30, phenylalanine 32, glutamate 34, glutamate 37, aspartate 65, aspartate 67, aspartate 69, methionine 71, and glutamate 76.

The protein belongs to the parvalbumin family.

In terms of biological role, in muscle, parvalbumin is thought to be involved in relaxation after contraction. It binds two calcium ions. The protein is Parvalbumin beta 3 of Macruronus novaezelandiae (Blue grenadier).